The sequence spans 66 residues: Large ribosomal subunit protein bL33c (66 aa).

The protein belongs to the bacterial ribosomal protein bL33 family.

Its subcellular location is the plastid. It is found in the chloroplast. In Manihot esculenta (Cassava), this protein is Large ribosomal subunit protein bL33c.